The primary structure comprises 109 residues: uncharacterized protein (109 aa).

The chain crosses the membrane as a helical span at residues 63 to 85 (LFVKTFFACTYIIMLAFQVYIFL).

The protein resides in the membrane. This is an uncharacterized protein from Saccharomyces cerevisiae (strain ATCC 204508 / S288c) (Baker's yeast).